Here is a 245-residue protein sequence, read N- to C-terminus: Biosynthetic peptidoglycan transglycosylase (245 aa).

Residues 19–41 form a helical membrane-spanning segment; sequence CLRWVLAAPLLFAAASVLQVLFL.

This sequence belongs to the glycosyltransferase 51 family.

The protein localises to the cell inner membrane. The catalysed reaction is [GlcNAc-(1-&gt;4)-Mur2Ac(oyl-L-Ala-gamma-D-Glu-L-Lys-D-Ala-D-Ala)](n)-di-trans,octa-cis-undecaprenyl diphosphate + beta-D-GlcNAc-(1-&gt;4)-Mur2Ac(oyl-L-Ala-gamma-D-Glu-L-Lys-D-Ala-D-Ala)-di-trans,octa-cis-undecaprenyl diphosphate = [GlcNAc-(1-&gt;4)-Mur2Ac(oyl-L-Ala-gamma-D-Glu-L-Lys-D-Ala-D-Ala)](n+1)-di-trans,octa-cis-undecaprenyl diphosphate + di-trans,octa-cis-undecaprenyl diphosphate + H(+). Its pathway is cell wall biogenesis; peptidoglycan biosynthesis. Its function is as follows. Peptidoglycan polymerase that catalyzes glycan chain elongation from lipid-linked precursors. This is Biosynthetic peptidoglycan transglycosylase from Xanthomonas oryzae pv. oryzae (strain KACC10331 / KXO85).